The primary structure comprises 81 residues: Large ribosomal subunit protein bL31B (81 aa).

Belongs to the bacterial ribosomal protein bL31 family. Type B subfamily. Part of the 50S ribosomal subunit.

The chain is Large ribosomal subunit protein bL31B from Lactobacillus helveticus (strain DPC 4571).